Consider the following 198-residue polypeptide: Transmembrane protein 17 (198 aa).

Residues N13 and N23 are each glycosylated (N-linked (GlcNAc...) asparagine). 4 helical membrane-spanning segments follow: residues M45–L65, F78–G98, L110–F130, and A142–L162.

Belongs to the TMEM17 family. As to quaternary structure, part of the tectonic-like complex (also named B9 complex).

It is found in the cell projection. Its subcellular location is the cilium membrane. In terms of biological role, transmembrane component of the tectonic-like complex, a complex localized at the transition zone of primary cilia and acting as a barrier that prevents diffusion of transmembrane proteins between the cilia and plasma membranes. Required for ciliogenesis and sonic hedgehog/SHH signaling. The sequence is that of Transmembrane protein 17 (TMEM17) from Bos taurus (Bovine).